Reading from the N-terminus, the 271-residue chain is Transmembrane protein 150A (271 aa).

The Cytoplasmic portion of the chain corresponds to 1–2; it reads MT. Residues 3–23 form a helical membrane-spanning segment; the sequence is AWILLPVSLSAFSITGIWTVY. Over 24 to 75 the chain is Extracellular; the sequence is AMAVMNHHVCPVENWSYNESCPPDPAEQGGPKTCCTLDDVPLISKCGSYPPE. 2 N-linked (GlcNAc...) asparagine glycosylation sites follow: Asn37 and Asn41. The chain crosses the membrane as a helical span at residues 76-96; that stretch reads SCLFSLIGNMGAFMVALICLL. The Cytoplasmic segment spans residues 97–108; the sequence is RYGQLLEQSRHS. Residues 109–129 traverse the membrane as a helical segment; the sequence is WVNTTALITGCTNAAGLLVVG. At 130-140 the chain is on the extracellular side; that stretch reads NFQVDHARSLH. A helical membrane pass occupies residues 141–161; that stretch reads YVGAGVAFPAGLLFVCLHCAL. Over 162–178 the chain is Cytoplasmic; it reads SYQGATAPLDLAVAYLR. The chain crosses the membrane as a helical span at residues 179 to 199; sequence SVLAVIAFITLVLSGVFFVHE. At 200–211 the chain is on the extracellular side; that stretch reads SSQLQHGAALCE. A helical transmembrane segment spans residues 212–232; sequence WVCVIDILIFYGTFSYEFGAV. The Cytoplasmic portion of the chain corresponds to 233 to 271; it reads SSDTLVAALQPTPGRACKSSGSSSTSTHLNCAPESIAMI.

The protein belongs to the DRAM/TMEM150 family. In terms of assembly, interacts (via C-terminal cytoplasmic tail) with PI4KA.

Its subcellular location is the cell membrane. Its function is as follows. Regulates localization of phosphatidylinositol 4-kinase (PI4K) to the plasma membrane, possibly by reducing the association of TTC7 (TTC7A or TTC7B) with the PI4K complex. Acts as a regulator of phosphatidylinositol 4-phosphate (PtdIns(4)P) synthesis. May also play a role in fasting-induced catabolism. This chain is Transmembrane protein 150A (TMEM150A), found in Homo sapiens (Human).